A 321-amino-acid polypeptide reads, in one-letter code: Olfactory receptor 51V1 (321 aa).

Residues 1-34 (MFLSSRMITSVSPSTSTNSSFLLTGFSGMEQQYP) are Extracellular-facing. N-linked (GlcNAc...) asparagine glycosylation occurs at N18. Residues 35–55 (WLSIPFSSIYAMVLLGNCMVL) traverse the membrane as a helical segment. Residues 56–63 (HVIWTEPS) lie on the Cytoplasmic side of the membrane. A helical membrane pass occupies residues 64-84 (LHQPMFYFLSMLALTDLCMGL). Residues 85–108 (STVYTVLGILWGIIREISLDSCIA) are Extracellular-facing. C106 and C188 form a disulfide bridge. Residues 109–129 (QSYFIHGLSFMESSVLLTMAF) form a helical membrane-spanning segment. The Cytoplasmic segment spans residues 130 to 148 (DRYIAICNPLRYSSILTNS). A helical transmembrane segment spans residues 149-169 (RIIKIGLTIIGRSFFFITPPI). At 170–205 (ICLKFFNYCHFHILSHSFCLHQDLLRLACSDIRFNS) the chain is on the extracellular side. The helical transmembrane segment at 206–226 (YYALMLVICILLLDAILILFS) threads the bilayer. Over 227–246 (YILILKSVLAVASQEERHKL) the chain is Cytoplasmic. The chain crosses the membrane as a helical span at residues 247–267 (FQTCISHICAVLVFYIPIISL). Residues 268-282 (TMVHRFGKHLSPVAH) lie on the Extracellular side of the membrane. A helical membrane pass occupies residues 283–303 (VLIGNIYILFPPLMNPIIYSV). Over 304 to 321 (KTQQIHTRMLRLFSLKRY) the chain is Cytoplasmic.

It belongs to the G-protein coupled receptor 1 family.

The protein localises to the cell membrane. Its function is as follows. Odorant receptor. The sequence is that of Olfactory receptor 51V1 (OR51V1) from Homo sapiens (Human).